The following is a 210-amino-acid chain: Probable GTP-binding protein EngB (210 aa).

One can recognise an EngB-type G domain in the interval 29–203; sequence NGIEIAFAGR…SNKLDSWFAP (175 aa). Residues 37-44, 64-68, 82-85, 149-152, and 181-184 each bind GTP; these read GRSNAGKS, GRTQL, DLPG, TKAD, and IYSA. 2 residues coordinate Mg(2+): Ser44 and Thr66.

This sequence belongs to the TRAFAC class TrmE-Era-EngA-EngB-Septin-like GTPase superfamily. EngB GTPase family. The cofactor is Mg(2+).

In terms of biological role, necessary for normal cell division and for the maintenance of normal septation. The sequence is that of Probable GTP-binding protein EngB from Haemophilus ducreyi (strain 35000HP / ATCC 700724).